We begin with the raw amino-acid sequence, 1029 residues long: E3 ubiquitin-protein ligase UPL6 (1029 aa).

The disordered stretch occupies residues 1–20; it reads MFFSGDPSTRKRVDLGGRST. Residues 8 to 20 are compositionally biased toward basic and acidic residues; that stretch reads STRKRVDLGGRST. The IQ domain maps to 45–74; it reads QNSAALKIQKFFRGRRSMAIERSKVRHDFC. One can recognise an HECT domain in the interval 688–1029; that stretch reads SEDDLRSSIR…ISAEAGFDLS (342 aa). Cysteine 997 serves as the catalytic Glycyl thioester intermediate.

This sequence belongs to the UPL family.

The catalysed reaction is S-ubiquitinyl-[E2 ubiquitin-conjugating enzyme]-L-cysteine + [acceptor protein]-L-lysine = [E2 ubiquitin-conjugating enzyme]-L-cysteine + N(6)-ubiquitinyl-[acceptor protein]-L-lysine.. It functions in the pathway protein modification; protein ubiquitination. Functionally, probable E3 ubiquitin-protein ligase which mediates ubiquitination and subsequent proteasomal degradation of target proteins. This is E3 ubiquitin-protein ligase UPL6 (UPL6) from Arabidopsis thaliana (Mouse-ear cress).